The primary structure comprises 102 residues: Monothiol glutaredoxin-S8 (102 aa).

The Glutaredoxin domain maps to 1 to 101 (MEKIQKMISE…PMLKRFGALW (101 aa)). Position 21 (cysteine 21) interacts with [2Fe-2S] cluster. The short motif at 99-102 (ALWL) is the Responsive for interaction with TGA factors element.

The protein belongs to the glutaredoxin family. CC-type subfamily.

It is found in the cytoplasm. It localises to the nucleus. In terms of biological role, may only reduce GSH-thiol disulfides, but not protein disulfides. The sequence is that of Monothiol glutaredoxin-S8 (GRXS8) from Arabidopsis thaliana (Mouse-ear cress).